The primary structure comprises 157 residues: Transcription antitermination protein NusB (157 aa).

The protein belongs to the NusB family.

Involved in transcription antitermination. Required for transcription of ribosomal RNA (rRNA) genes. Binds specifically to the boxA antiterminator sequence of the ribosomal RNA (rrn) operons. The sequence is that of Transcription antitermination protein NusB from Xylella fastidiosa (strain 9a5c).